The primary structure comprises 90 residues: DNA-directed RNA polymerase subunit Rpo5 (90 aa).

Belongs to the archaeal Rpo5/eukaryotic RPB5 RNA polymerase subunit family. Part of the RNA polymerase complex.

It localises to the cytoplasm. It catalyses the reaction RNA(n) + a ribonucleoside 5'-triphosphate = RNA(n+1) + diphosphate. Functionally, DNA-dependent RNA polymerase (RNAP) catalyzes the transcription of DNA into RNA using the four ribonucleoside triphosphates as substrates. This chain is DNA-directed RNA polymerase subunit Rpo5, found in Aeropyrum pernix (strain ATCC 700893 / DSM 11879 / JCM 9820 / NBRC 100138 / K1).